Here is a 237-residue protein sequence, read N- to C-terminus: MENQPKLNSSKEVIAFLAERFPLCFTAEGEARPLKIGIFQDLVERVQGEENLSKTQLRSALRLYTSSWRYLYGVKVGAERVDLDGNPCGVLEEQHVEHARKQLEEAKARVQAQRAEQQAKKREAAIAAGETPEPRRPRPAGKKPAPRREAGAAPENRKPRQSPRPQQVRPPRPQVEENQPRPVPVTDISKLQIGQEIKVRAGKSAMDATVLEIAKDGVRVQLSSGLAMIVRAEHLQF.

Residues 106-188 form a disordered region; it reads AKARVQAQRA…QPRPVPVTDI (83 aa). Positions 146-158 are enriched in basic and acidic residues; sequence PRREAGAAPENRK.

This sequence belongs to the ProQ family.

The protein resides in the cytoplasm. Its function is as follows. RNA chaperone with significant RNA binding, RNA strand exchange and RNA duplexing activities. May regulate ProP activity through an RNA-based, post-transcriptional mechanism. This is RNA chaperone ProQ from Yersinia pseudotuberculosis serotype O:1b (strain IP 31758).